A 428-amino-acid chain; its full sequence is Protein terminus (428 aa).

Residues 325–346 (CRRCRTQFSRRSKLHIHQKLRC) form a C3H1-type zinc finger.

The protein is Protein terminus (term) of Drosophila melanogaster (Fruit fly).